The chain runs to 474 residues: 3-isopropylmalate dehydratase large subunit (474 aa).

Positions 355, 415, and 418 each coordinate [4Fe-4S] cluster.

It belongs to the aconitase/IPM isomerase family. LeuC type 1 subfamily. As to quaternary structure, heterodimer of LeuC and LeuD. [4Fe-4S] cluster is required as a cofactor.

It carries out the reaction (2R,3S)-3-isopropylmalate = (2S)-2-isopropylmalate. It functions in the pathway amino-acid biosynthesis; L-leucine biosynthesis; L-leucine from 3-methyl-2-oxobutanoate: step 2/4. Its function is as follows. Catalyzes the isomerization between 2-isopropylmalate and 3-isopropylmalate, via the formation of 2-isopropylmaleate. The protein is 3-isopropylmalate dehydratase large subunit of Shewanella sp. (strain W3-18-1).